We begin with the raw amino-acid sequence, 479 residues long: MSILVKNNIHWVGQRDWEVRDFHGTEYKTLRGSSYNSYLIREEKNVLIDTVDHKFSREFVQNLRSEIDLADIDYIIINHAEEDHAGALTELMAQIPDTPIYCTANAIDSINGHHHHPEWNFKVVKTGDTLDIGDGKQLIFVETPMLHWPDSMMTYMTGDAVLFSNDAFGQHYCDEHLFNDEVDQTELFEQCQRYYANILTPFSRLVTPKITEILGFNLPVDMIATSHGVVWRDNPTQIVELYLKWAADYQEDRITIFYDTMSNNTRMMADAIAQGINEVDPNVAVKIFNVARSDKNEILTNVFRSKGVLVGTSTMNNVMMPKIAGLVEEMTGLRFRNKRASAFGSHGWSGGAVDRLSTRLQDAGFEMSLSLKAKWRPDLDALELCRQHGRDIARQWALAPLPETTQKTAPVEETTTCTAADLGPKMQCSVCQWIYDPALGEPLQDVAPGTPWSDVPDNFLCPECSLGKDVFDVLATEAK.

A zinc metallo-hydrolase region spans residues leucine 30–isoleucine 210. Fe cation contacts are provided by histidine 79, glutamate 81, aspartate 83, histidine 147, aspartate 166, and histidine 227. One can recognise a Flavodoxin-like domain in the interval isoleucine 254 to alanine 393. Residues threonine 260–asparagine 264 and alanine 342–leucine 369 contribute to the FMN site. The Rubredoxin-like domain occupies glycine 423 to leucine 474. Positions 428, 431, 461, and 464 each coordinate Fe cation.

In the N-terminal section; belongs to the zinc metallo-hydrolase group 3 family. Homotetramer. It depends on Fe cation as a cofactor. FMN serves as cofactor.

Its subcellular location is the cytoplasm. The protein operates within nitrogen metabolism; nitric oxide reduction. Anaerobic nitric oxide reductase; uses NADH to detoxify nitric oxide (NO), protecting several 4Fe-4S NO-sensitive enzymes. Has at least 2 reductase partners, only one of which (NorW, flavorubredoxin reductase) has been identified. NO probably binds to the di-iron center; electrons enter from the NorW at rubredoxin and are transferred sequentially to the FMN center and the di-iron center. Also able to function as an aerobic oxygen reductase. The chain is Anaerobic nitric oxide reductase flavorubredoxin from Salmonella typhi.